Here is a 78-residue protein sequence, read N- to C-terminus: Large ribosomal subunit protein bL28 (78 aa).

This sequence belongs to the bacterial ribosomal protein bL28 family.

This Thioalkalivibrio sulfidiphilus (strain HL-EbGR7) protein is Large ribosomal subunit protein bL28.